The chain runs to 985 residues: UPF0182 protein cgR_0895 (985 aa).

7 consecutive transmembrane segments (helical) span residues 19 to 39 (VTWIFAIIALIILIAPMSVGF), 63 to 83 (IVLFVIFALIAGFVTWLAGYF), 115 to 135 (VMVLIPIFVALLAGLIGQRSW), 176 to 196 (SMMLIVAFLIALVGHYLMGGI), 215 to 235 (TQLAVTAGLWMLVKVAGYWLD), 262 to 282 (KIILLVIALFVAIAFFSAIFL), and 290 to 310 (LAVVLMLLSSVIIGAAWPLML). Positions 906 to 944 (AQDIEEVDGTTTTPSTDETDTDTDQPATETPTAPVSEAE) are disordered. Residues 929-939 (DQPATETPTAP) show a composition bias toward low complexity.

It belongs to the UPF0182 family.

The protein localises to the cell membrane. The chain is UPF0182 protein cgR_0895 from Corynebacterium glutamicum (strain R).